The sequence spans 1028 residues: MMLSWKQLILLSFIGCLAGELLLQGPVFIKEPSNSIFPVDSEDKKITLNCEARGNPSPHYRWQLNGSDIDTSLDHRYKLNGGNLIVINPNRNWDTGSYQCFATNSLGTIVSREAKLQFAYLENFKTRMRSTVSVREGQGVVLLCGPPPHSGELSYAWVFNEYPSFVEEDSRRFVSQETGHLYIAKVEPSDVGNYTCVVTSTVTNTRVLGSPTPLVLRSDGVMGEYEPKIEVQFPETLPAAKGSTVRLECFALGNPVPQINWRRSDGMPFPNKIKLRKFNGMLEIQNFQQEDTGSYECIAENSRGKNVARGRLTYYAKPYWLQLLRDVEIAVEDSLYWECRASGKPKPSYRWLKNGDALVLEERIQIENGALTITNLNVTDSGMFQCIAENKHGLIYSSAELKVVASAPDFSRNPMKKMVQVQVGSLVILDCKPRASPRALSFWKKGDMMVREQARVSFLNDGGLKIMNVTKADAGTYTCTAENQFGKANGTTHLVVTEPTRIILAPSNMDVAVGESVILPCQVQHDPLLDIMFAWYFNGALTDFKKDGSHFEKVGGSSSGDLMIRNIQLKHSGKYVCMVQTGVDSVSSAAELIVRGSPGPPENVKVDEITDTTAQLSWTEGTDSHSPVISYAVQARTPFSVGWQSVRTVPEVIDGKTHTATVVELNPWVEYEFRIVASNKIGGGEPSLPSEKVRTEEAAPEIAPSEVSGGGGSRSELVITWDPVPEELQNGGGFGYVVAFRPLGVTTWIQTVVTSPDNPRYVFRNESIVPFSPYEVKVGVYNNKGEGPFSPVTTVFSAEEEPTVAPSHISAHSLSSSEIEVSWNTIPWKLSNGHLLGYEVRYWNNGGEEESSRKVKVAGNQTSAVLRGLKSNLAYYTAVRAYNSAGAGPFSATVNATTKKTPPSQPPGNVVWNATDTKVLLNWEQVKAMENESEVTGYKVFYRTSSQNNVHVLNTNKTSAELLLPIKEDYIIEVKATTDGGDGTSSEQIRIPRITSMDARGSTSAISNIHPLSGYMSVLLFFIVNALW.

Residues 1-19 form the signal peptide; the sequence is MMLSWKQLILLSFIGCLAG. 6 consecutive Ig-like C2-type domains span residues 32 to 117, 122 to 209, 227 to 313, 318 to 402, 408 to 497, and 499 to 593; these read PSNS…AKLQ, ENFK…RVLG, PKIE…GRLT, PYWL…AELK, PDFS…LVVT, and PTRI…AELI. 5 cysteine pairs are disulfide-bonded: C50–C100, C144–C196, C249–C297, C339–C386, and C431–C479. N-linked (GlcNAc...) asparagine glycans are attached at residues N65 and N193. Residues N377, N468, and N489 are each glycosylated (N-linked (GlcNAc...) asparagine). C521 and C577 are oxidised to a cystine. Fibronectin type-III domains follow at residues 600–698, 703–800, 805–901, and 902–998; these read PPEN…TEEA, APSE…SAEE, APSH…TKKT, and PPSQ…TSMD. The segment at 684–714 is disordered; sequence GEPSLPSEKVRTEEAAPEIAPSEVSGGGGSR. N-linked (GlcNAc...) asparagine glycosylation is found at N765, N860, N895, N913, N931, and N956. S1002 carries the GPI-anchor amidated serine lipid modification. Residues 1003–1028 constitute a propeptide, removed in mature form; that stretch reads TSAISNIHPLSGYMSVLLFFIVNALW.

It belongs to the immunoglobulin superfamily. Contactin family. As to quaternary structure, interacts with PTPRG. In terms of tissue distribution, specifically expressed in brain. Ectopically expressed in tumors expressing endogenous intracisternal A-type particles (IAPs).

The protein resides in the cell membrane. In terms of biological role, contactins mediate cell surface interactions during nervous system development. Has some neurite outgrowth-promoting activity. This is Contactin-3 (Cntn3) from Mus musculus (Mouse).